The primary structure comprises 374 residues: L-serine/homoserine O-acetyltransferase (374 aa).

The 312-residue stretch at 46-357 (AVLVLTGLSP…TPAGHDAFLV (312 aa)) folds into the AB hydrolase-1 domain. The Nucleophile role is filled by Ser149. Active-site residues include Asp319 and His352.

This sequence belongs to the AB hydrolase superfamily. MetX family. Homodimer.

The protein localises to the cytoplasm. It carries out the reaction L-serine + acetyl-CoA = O-acetyl-L-serine + CoA. The catalysed reaction is L-homoserine + acetyl-CoA = O-acetyl-L-homoserine + CoA. The protein operates within antibiotic biosynthesis. Functionally, involved in the biosynthesis of the antibiotic D-cycloserine (DCS), a cyclic structural analog of D-alanine, used as an antitubercular agent. Catalyzes the transfer of the acetyl group from acetyl-CoA to the hydroxyl group of L-serine to yield the activated serine, O-acetyl-L-serine. It prefers L-serine over L-homoserine. In Streptomyces lavendulae, this protein is L-serine/homoserine O-acetyltransferase.